The primary structure comprises 445 residues: Proline--tRNA ligase (445 aa).

Belongs to the class-II aminoacyl-tRNA synthetase family. ProS type 2 subfamily. Homodimer.

Its subcellular location is the cytoplasm. It carries out the reaction tRNA(Pro) + L-proline + ATP = L-prolyl-tRNA(Pro) + AMP + diphosphate. Its function is as follows. Catalyzes the attachment of proline to tRNA(Pro) in a two-step reaction: proline is first activated by ATP to form Pro-AMP and then transferred to the acceptor end of tRNA(Pro). The chain is Proline--tRNA ligase from Cereibacter sphaeroides (strain ATCC 17029 / ATH 2.4.9) (Rhodobacter sphaeroides).